The primary structure comprises 117 residues: Large ribosomal subunit protein bL17 (117 aa).

Belongs to the bacterial ribosomal protein bL17 family. In terms of assembly, part of the 50S ribosomal subunit. Contacts protein L32.

The polypeptide is Large ribosomal subunit protein bL17 (Exiguobacterium sp. (strain ATCC BAA-1283 / AT1b)).